Consider the following 230-residue polypeptide: UPF0173 metal-dependent hydrolase SPO2976 (230 aa).

Belongs to the UPF0173 family.

In Ruegeria pomeroyi (strain ATCC 700808 / DSM 15171 / DSS-3) (Silicibacter pomeroyi), this protein is UPF0173 metal-dependent hydrolase SPO2976.